The primary structure comprises 865 residues: MHSAKNEKCNACGGYRFSVNDGFKYCDRCGALFENFEELEEEEGGLQQTVGQGKVKVRKNDDQKRVRNNAAPVNLPKAQVMREALEKRSDFLQQQAIKGEELELPHDATPDYLYRLALRLFSFTQILAKSGHILVHELNFESRVQENILATFQKYLAHCQVAFCHSEQCGNDEHLRFVAVMENLRYEQEEREEKQRKRMAKRGKGVNALSKSAAAWTLLTQGNITEHLDIASDEDGDQDAQGGQQLDDLTLETTQNPDESIRVNDTTMGFVRKVTTALSKEALRRASQLILNLEMLVAILHSALMSSGYQTILTSDVVRWIREDRFRISRRSIRLIRQSQPERMKQGEVVKPTIVDYAEPFLRFPLYEIMRTCTIFHQSLKLASSMAPQSFESMSARLVDNLNLPSDILSRMLILESIIPCDVSPQLLKQVDVDMGYNCGQLAAMSPNVYYSGFLTSFGRKERGTQDADFCDEVLLSPDAKLIAYLLLTLRLTFQLDNAQCALQDDQYFDVDSWIHQLEMRIKCWQGHNMSLVMRSSSHVPEMVVDPPFGTNYLFHQEKGAPQVSCRRRQAGFQKCIPTEMSFNSTSTLPTVFDVRHMGLLTERCQMEALISPVKFQRTVLGNEIERDPLTFENVDRQSKNTFFKHFSAFKTTESCDTFEEYFPCAKNYLLFKRPDWIQNCTARQTHFNPVTGPIRFYLSNQSCDDLLGTAATSFSRRFQFLLDALSLIIGEDKKAVYAAFVMLEMHLTSSERIQSIRDDLLTSSPITLKCQKFRNSTHHIPRKYGVISEVPIDRIENLRYFRLSRQFFEHEEMPTTINMELIDYRNQEIRDSVTETEVQRAQNRIMKLCYEFEQFFGILAVKFW.

The RRN7-type zinc finger occupies 1 to 33 (MHSAKNEKCNACGGYRFSVNDGFKYCDRCGALF). 4 residues coordinate Zn(2+): Cys9, Cys12, Cys26, and Cys29. The tract at residues 35–99 (NFEELEEEEG…DFLQQQAIKG (65 aa)) is B-reader. Positions 100 to 111 (EELELPHDATPD) are B-linker. Positions 112-348 (YLYRLALRLF…SQPERMKQGE (237 aa)) are N-terminal cyclin fold. Residues 233 to 261 (DEDGDQDAQGGQQLDDLTLETTQNPDESI) form a disordered region. Positions 239–248 (DAQGGQQLDD) are enriched in low complexity. Over residues 252 to 261 (ETTQNPDESI) the composition is skewed to polar residues. Residues 349 to 496 (VVKPTIVDYA…LLTLRLTFQL (148 aa)) are C-terminal cyclin fold.

The protein belongs to the RRN7/TAF1B family.

Its subcellular location is the nucleus. The protein localises to the nucleolus. Functionally, component of RNA polymerase I core factor complex that acts as a GTF2B/TFIIB-like factor and plays a key role in multiple steps during transcription initiation such as pre-initiation complex (PIC) assembly and postpolymerase recruitment events in polymerase I (Pol I) transcription. Binds rDNA promoters and plays a role in Pol I recruitment. In Caenorhabditis elegans, this protein is TATA box-binding protein-associated factor RNA polymerase I subunit B.